A 467-amino-acid chain; its full sequence is MAVDTMESVAVVAVPFPAQGHLNQLLHLSLLLASRGLSVHYAAPPPHVRQARARVHGWDPRALGSIRFHDLDVPPYDSPAPDLAAPSPFPNHLMPMFEAFAAAARAPLAALLQRLSTSYRRVAVVFDRLNPFAATEAARLANADAFGLQCVAISYNVGWLDPGHRLLSDYGLQFLPPDACMSREFVDLVFRMEEEEQGAPVAGLVMNTCRALEGEFLDVVAAQPPFQGQRFFAVGPLNPLLLDADAPTTPPGQARHECLEWLDRQPPESVLYVSFGTTSCLHADQVAELAAALKGSKQRFVWVLRDADRADIYAESGESRHAMFLSEFTRETEGTGLVITGWAPQLEILAHGATAAFMSHCGWNSTIESLSHGKPVLAWPMHSDQPWDSELLCKYFKAGLLVRPWEKHAEIVPAQAIQKVIEEAMLSDSGMAVRQRAKELGEAVRASVADGGNSRKDLDDFIGYITR.

His21 (proton acceptor) is an active-site residue. 2 residues coordinate an anthocyanidin: His21 and Asn91. The active-site Charge relay is Asp127. 9 residues coordinate UDP-alpha-D-glucose: Ala343, Gln345, His360, Trp363, Asn364, Ser365, Glu368, Asp384, and Gln385.

This sequence belongs to the UDP-glycosyltransferase family. Highly expressed in root. Expressed at lower level in kernel and cob. Weakly expressed in leaves. Weakly or not expressed in stems.

The catalysed reaction is cis-zeatin + UDP-alpha-D-glucose = O-beta-D-glucosyl-cis-zeatin + UDP + H(+). Its function is as follows. Utilizes UDP-glucose as the sugar donor and catalyzes the formation of O-beta-D-glucosyl-cis-zeatin from cis-zeatin. May regulate active versus storage forms of cytokinins and could have an impact on seed growth. The sequence is that of Cis-zeatin O-glucosyltransferase 1 (CISZOG1) from Zea mays (Maize).